Here is a 393-residue protein sequence, read N- to C-terminus: Methylthioribose kinase (393 aa).

ATP is bound by residues asparagine 38, lysine 53, and 107-109 (EDL). Aspartate 225 lines the substrate pocket. An ATP-binding site is contributed by 242-244 (DPE). Position 332 (arginine 332) interacts with substrate.

It belongs to the methylthioribose kinase family. In terms of assembly, homodimer.

The catalysed reaction is 5-(methylsulfanyl)-D-ribose + ATP = 5-(methylsulfanyl)-alpha-D-ribose 1-phosphate + ADP + H(+). Its pathway is amino-acid biosynthesis; L-methionine biosynthesis via salvage pathway; S-methyl-5-thio-alpha-D-ribose 1-phosphate from S-methyl-5'-thioadenosine (hydrolase route): step 2/2. Its function is as follows. Catalyzes the phosphorylation of methylthioribose into methylthioribose-1-phosphate. The chain is Methylthioribose kinase from Bacillus anthracis (strain A0248).